The chain runs to 3655 residues: NuA4 acetyltransferase complex subunit Tra2 (3655 aa).

The interval 8-2459 (SLSSSIELLK…REYHIRLLGK (2452 aa)) is HEAT. HEAT repeat units follow at residues 46 to 89 (QLYA…CAHR), 94 to 131 (QYAQSCVLSFISLIKADNEEVAVFCLKVIMDIFKTFKF), 149 to 188 (TNLPYLIPSIFVENPKSNEEENTTLAFGSYLSTETSIIQQ), 230 to 268 (PGVQAIIPCFLKMVQIDVPIDIASYAMIEKDSSIDFIEF), 300 to 338 (LSEKDIIPDIVIKLLRRCPFDMCFARKELLVATRHILST), 374 to 412 (STLADLLHHVRDELNETQIRKSIMIYSTNMHDLTLSIGL), 438 to 475 (FLLLSIFDSFVNKFSELNDSLDQFFKKKYEEEIKETKS), 606 to 643 (IFLKVFETNLPTFFDQLKKNLTLFHIPQFLLSNESTSS), 644 to 683 (KFLNILLRFLLSRIEELGSSDIRHGSVLLRLFRLSFVTVS), 735 to 772 (SLYKEVMPLLHALLEAFNSLLISARTPKEKDLFTELCL), 783 to 820 (PYMSYLMRPLVMSLKSSQELVSQGLRTFELCLDNLTPD), 828 to 867 (PYIEDLMNALWSHLQPLPYNYNHSHTALKILGKLGGRNRK), 1100 to 1141 (AFIL…QDHS), 1147 to 1184 (DRQVDILTALFFTLKDTTSEVPTVCKDHVMDVLKQLFR), 1193 to 1230 (EIAPGILGHLVLELSNHNSVVRSSTQKLLSLLSELSNT), 1429 to 1470 (RKLL…LFHL), 1665 to 1704 (NLVSDLTAHLVKKIEEPDLENNVKLILNLILSKDYGFLLK), 1709 to 1746 (GILLTYLNQNVSSLEKCNQIFSIFYEVFFQHPSTNVYA), 1753 to 1790 (IGALQIISFFLKNVPEITVQHQTEMLKMCSLFGNSEDV), 1808 to 1846 (QFPYELVNVVYMALLKSSPIEVRHLVKSSFDNIFSYIFS), 1891 to 1934 (EHRG…WNDL), 1973 to 2011 (SEAISLLERLLSSGTWASLGMKLSFFTKSITHFDATDAN), 2036 to 2073 (ENLSDLKFLLEKSLENESVGVQSAIGNFVSTILTLSNT), 2120 to 2157 (DALHTLLPGFMRCFHKVAKEFLSLGSQPSGNSLNLQIV), 2183 to 2221 (DQRRWFLSALVQIIEKSSSYEICNYLLEIVRGWIMNSPV), and 2401 to 2438 (DFVLPVLSLQFSNSKIAEYLWRDFFNASVCSFTKDEIP). Residues 2460–3655 (TPNVLETILT…QMDQLWQAWL (1196 aa)) form a head region. The 562-residue stretch at 2484 to 3045 (LLVYLSKTYG…HFQLRTAYED (562 aa)) folds into the FAT domain. A disordered region spans residues 3059-3105 (RGNSRLRENDSSSDNKSKDLSPSGSFSSVSQFNSKNGSPSSIDSSEK). Over residues 3063-3077 (RLRENDSSSDNKSKD) the composition is skewed to basic and acidic residues. The segment covering 3078–3092 (LSPSGSFSSVSQFNS) has biased composition (low complexity). One can recognise a PI3K/PI4K catalytic domain in the interval 3285–3625 (VPNVDLVRGH…VISHNVPEDL (341 aa)). The G-loop stretch occupies residues 3291–3297 (VRGHTMC). Positions 3491-3499 (NIGGRSPQK) are catalytic loop. The tract at residues 3511–3536 (SQDLLPSMTSNQPVFHNTEAVPFRLT) is activation loop. Residues 3623-3655 (EDLPLNQTLVDLVSQATNPQQLAQMDQLWQAWL) form the FATC domain.

The protein belongs to the PI3/PI4-kinase family. TRA1 subfamily. In terms of assembly, component of the NuA4 acetyltransferase complex. Tra1 is the scaffold subunit for binding to a variety of transcription activators or transcription factors to recruit NuA4 for targeted gene activation. Requires Hsp90 and its co-chaperone, the Triple-T complex (TTT), for its incorporation into NuA4. Interacts with tel2.

In terms of biological role, component of the NuA4 histone H4/H2A acetyltransferase involved in transcription and DNA repair. This is NuA4 acetyltransferase complex subunit Tra2 from Schizosaccharomyces pombe (strain 972 / ATCC 24843) (Fission yeast).